Reading from the N-terminus, the 678-residue chain is UvrABC system protein B (678 aa).

One can recognise a Helicase ATP-binding domain in the interval 26–185 (EGLEDGEAFQ…LTTMQYTRND (160 aa)). 39 to 46 (GVTGSGKT) serves as a coordination point for ATP. A Beta-hairpin motif is present at residues 92–115 (YYDYYQPEAYVPASDTYIAKDSSV). The Helicase C-terminal domain occupies 430–596 (QVDDLLGEIR…KLNKKITDIL (167 aa)). Residues 597-630 (EDSPYAPKPGASAAKLKAAEADGEYSPQEMQRMT) form a disordered region. One can recognise a UVR domain in the interval 635-670 (ASEIKRMEKQMYQAAKDLDFELAAKLRDDLKRLKSS).

It belongs to the UvrB family. As to quaternary structure, forms a heterotetramer with UvrA during the search for lesions. Interacts with UvrC in an incision complex.

The protein localises to the cytoplasm. In terms of biological role, the UvrABC repair system catalyzes the recognition and processing of DNA lesions. A damage recognition complex composed of 2 UvrA and 2 UvrB subunits scans DNA for abnormalities. Upon binding of the UvrA(2)B(2) complex to a putative damaged site, the DNA wraps around one UvrB monomer. DNA wrap is dependent on ATP binding by UvrB and probably causes local melting of the DNA helix, facilitating insertion of UvrB beta-hairpin between the DNA strands. Then UvrB probes one DNA strand for the presence of a lesion. If a lesion is found the UvrA subunits dissociate and the UvrB-DNA preincision complex is formed. This complex is subsequently bound by UvrC and the second UvrB is released. If no lesion is found, the DNA wraps around the other UvrB subunit that will check the other stand for damage. This Hydrogenovibrio crunogenus (strain DSM 25203 / XCL-2) (Thiomicrospira crunogena) protein is UvrABC system protein B.